Reading from the N-terminus, the 152-residue chain is UPF0266 membrane protein YobD (152 aa).

Helical transmembrane passes span 6–26 (LVLILFIAALLAFAIYDQFIM), 45–65 (IDSVIFVGLIVILIYNNVTNH), and 67–87 (ALITTWLLSALALMGFYIFWI).

The protein belongs to the UPF0266 family.

It localises to the cell inner membrane. The protein is UPF0266 membrane protein YobD of Shigella dysenteriae serotype 1 (strain Sd197).